We begin with the raw amino-acid sequence, 442 residues long: Chromosomal replication initiator protein DnaA (442 aa).

The interval 1 to 69 (METLWDGILS…AQAGEQVIGR (69 aa)) is domain I, interacts with DnaA modulators. A domain II region spans residues 69 to 103 (RPIQVDFIVSEQSEEALKPVIEREPAPAAPPANVA). The domain III, AAA+ region stretch occupies residues 104–320 (SLNSKYTFSR…GALIRAVAYV (217 aa)). G148, G150, K151, and T152 together coordinate ATP. Residues 321–442 (SISGLPMTVE…GNRLEADARH (122 aa)) are domain IV, binds dsDNA.

The protein belongs to the DnaA family. Oligomerizes as a right-handed, spiral filament on DNA at oriC.

Its subcellular location is the cytoplasm. Functionally, plays an essential role in the initiation and regulation of chromosomal replication. ATP-DnaA binds to the origin of replication (oriC) to initiate formation of the DNA replication initiation complex once per cell cycle. Binds the DnaA box (a 9 base pair repeat at the origin) and separates the double-stranded (ds)DNA. Forms a right-handed helical filament on oriC DNA; dsDNA binds to the exterior of the filament while single-stranded (ss)DNA is stabiized in the filament's interior. The ATP-DnaA-oriC complex binds and stabilizes one strand of the AT-rich DNA unwinding element (DUE), permitting loading of DNA polymerase. After initiation quickly degrades to an ADP-DnaA complex that is not apt for DNA replication. Binds acidic phospholipids. This Gloeobacter violaceus (strain ATCC 29082 / PCC 7421) protein is Chromosomal replication initiator protein DnaA.